The sequence spans 557 residues: MRSHGRWGPCFLLFLLLLPPPLFRAGSLRYHGPGWRMFQRLALGSRRANHHHGPGWRQQLRQGQAGHRCQGSFDLYFILDKSGSVNNNWIDLYMWVEETVARFQSSDIRMCFITYSTDGQTVLPLTSDKNRIKNGLDQLRKIVPDGHTFMQAGFRKAIQQIETFNSGNKVPSMIIAMTDGELVAHAFQDTLREAQKARKLGANVYTVDVADYKLDQITAIADSPEHVFAVENGFKAMRDTVDALTSKVCLDVTSVEPPTVCVGEPYHVVVHGNGFQNLKKQDEVICRFIFNETTIVDEKPTSIDNNSMNCPGPKLEKPGEEYFIEVSLNNGKTFFKSNVSVTSSTCGIFSNWLYFLLPLLLLPLLLCCLWRLCRKKTVKEPPPVQKPEKEPEQEKPPPPPPPSPPPPLPPPPPPPPPVNTCPTVIVCCCACQGVCGIRGIEGNLDTFCDLSHPSCCQVPWMWCQRRDQGRYLSLALAQSQYAQAPCCPRIGFPHSQESPSLPETQPGVLFPSTDSVQPKELPSTWPAVPPHCSGTLQNPLCPSLPRSPTSKAPNTQD.

Positions 1-25 are cleaved as a signal peptide; sequence MRSHGRWGPCFLLFLLLLPPPLFRA. Topologically, residues 26–345 are extracellular; it reads GSLRYHGPGW…KSNVSVTSST (320 aa). Residues 74–244 enclose the VWFA domain; the sequence is DLYFILDKSG…KAMRDTVDAL (171 aa). Residues serine 82, serine 84, and threonine 148 each contribute to the a divalent metal cation site. A helical membrane pass occupies residues 346-366; that stretch reads CGIFSNWLYFLLPLLLLPLLL. Residues 367 to 557 lie on the Cytoplasmic side of the membrane; sequence CCLWRLCRKK…PTSKAPNTQD (191 aa). Disordered stretches follow at residues 380-411 and 497-557; these read EPPPVQKPEKEPEQEKPPPPPPPSPPPPLPPP and ESPS…NTQD. Positions 386-395 are enriched in basic and acidic residues; that stretch reads KPEKEPEQEK. The span at 396-411 shows a compositional bias: pro residues; it reads PPPPPPPSPPPPLPPP. The span at 534–557 shows a compositional bias: polar residues; sequence GTLQNPLCPSLPRSPTSKAPNTQD.

Belongs to the ATR family.

It is found in the membrane. This chain is Anthrax toxin receptor-like (ANTXRL), found in Macaca fascicularis (Crab-eating macaque).